A 105-amino-acid polypeptide reads, in one-letter code: Large ribosomal subunit protein uL24 (105 aa).

Belongs to the universal ribosomal protein uL24 family. Part of the 50S ribosomal subunit.

One of two assembly initiator proteins, it binds directly to the 5'-end of the 23S rRNA, where it nucleates assembly of the 50S subunit. Functionally, one of the proteins that surrounds the polypeptide exit tunnel on the outside of the subunit. The chain is Large ribosomal subunit protein uL24 from Lachnoclostridium phytofermentans (strain ATCC 700394 / DSM 18823 / ISDg) (Clostridium phytofermentans).